Consider the following 475-residue polypeptide: Cytosolic non-specific dipeptidase (475 aa).

K9 is modified (N6-acetyllysine). Phosphoserine is present on S58. H99 lines the Mn(2+) pocket. D101 is a catalytic residue. D132 is a Mn(2+) binding site. The active-site Proton acceptor is E166. Residues 166–167 (EE), D195, H228, T330, R343, S417, and H445 each bind substrate. E167 and D195 together coordinate Mn(2+). H445 serves as a coordination point for Mn(2+).

The protein belongs to the peptidase M20A family. As to quaternary structure, homodimer. The cofactor is Mn(2+).

It localises to the cytoplasm. The catalysed reaction is Hydrolysis of dipeptides, preferentially hydrophobic dipeptides including prolyl amino acids.. It carries out the reaction L-threonyl-L-threonine + H2O = 2 L-threonine. The enzyme catalyses L-threonyl-L-serine + H2O = L-threonine + L-serine. It catalyses the reaction L-seryl-L-threonine + H2O = L-threonine + L-serine. The catalysed reaction is L-cysteinylglycine + H2O = L-cysteine + glycine. It carries out the reaction L-alanyl-L-cysteine + H2O = L-cysteine + L-alanine. The enzyme catalyses (S)-lactate + L-phenylalanine = N-[(S)-lactoyl]-L-phenylalanine + H2O. In terms of biological role, catalyzes the peptide bond hydrolysis in dipeptides, displaying a non-redundant activity toward threonyl dipeptides. Mediates threonyl dipeptide catabolism in a tissue-specific way. Has high dipeptidase activity toward cysteinylglycine, an intermediate metabolite in glutathione metabolism. Metabolizes N-lactoyl-amino acids, both through hydrolysis to form lactic acid and amino acids, as well as through their formation by reverse proteolysis. Plays a role in the regulation of cell cycle arrest and apoptosis. The polypeptide is Cytosolic non-specific dipeptidase (CNDP2) (Bos taurus (Bovine)).